Consider the following 221-residue polypeptide: Probable septum site-determining protein MinC (221 aa).

This sequence belongs to the MinC family. In terms of assembly, interacts with MinD and FtsZ.

Functionally, cell division inhibitor that blocks the formation of polar Z ring septums. Rapidly oscillates between the poles of the cell to destabilize FtsZ filaments that have formed before they mature into polar Z rings. Prevents FtsZ polymerization. This chain is Probable septum site-determining protein MinC, found in Aliivibrio fischeri (strain ATCC 700601 / ES114) (Vibrio fischeri).